A 481-amino-acid chain; its full sequence is MARTGAEYIEALKTRPPNLWYKGEKVEDPTTHPVFRGIVRTMAALYDLQHDPRYREVLTYEEEGKRHGMSFLIPKTKEDLKRRGQAYKLWADQNLGMMGRSPDYLNAVVMAYAASADYFGEFAENVRNYYRYLRDQDLATTHALTNPQVNRARPPSGQPDPYIPVGVVKQTEKGIVVRGARMTATFPLADEVLIFPSTLLQAGSEKYALAFALPTSTPGLHFVCREALVGGDSPFDHPLSSRVEEMDCLVIFDDVLVPWERVFILGNVELCNNAYAATGALNHMAHQVVALKTAKTEAFLGVAALMAEGIGADVYGHVQEKIAEIIVYLEAMRAFWTRAEEEAKENAYGLLVPDRGALDGARNLYPRLYPRIREILEQIGASGLITLPSEKDFKGPLGPFLEKFLQGAALEAKERVALFRLAWDMTLSGFGARQELYERFFFGDPVRMYQTLYNVYNKEPYKERIRAFLKESLKVFEEVQA.

Residues 100–104 and histidine 142 contribute to the substrate site; that span reads RSPDY. FAD contacts are provided by residues 142-144, 148-151, and threonine 185; these read HAL and QVNR. 197-198 is a binding site for substrate; that stretch reads ST. 444-447 contacts FAD; it reads DPVR.

The protein belongs to the FADH(2)-utilizing monooxygenase family. As to quaternary structure, homotetramer consisting of a dimer of dimers. 4-HPA 3-monooxygenase consists of a reductase component HpaC and an oxygenase component HpaB.

It catalyses the reaction 4-hydroxyphenylacetate + FADH2 + O2 = 3,4-dihydroxyphenylacetate + FAD + H2O + H(+). It functions in the pathway aromatic compound metabolism; 4-hydroxyphenylacetate degradation; pyruvate and succinate semialdehyde from 4-hydroxyphenylacetate: step 1/7. In terms of biological role, utilizes FADH(2) supplied by HpaC, to catalyze the hydroxylation of 4-hydroxyphenylacetic acid, leading to the production of 3,4-dihydroxyphenylacetic acid (DHPA). This Thermus thermophilus (strain ATCC 27634 / DSM 579 / HB8) protein is 4-hydroxyphenylacetate 3-monooxygenase oxygenase component.